Here is a 284-residue protein sequence, read N- to C-terminus: Proton-translocating ferredoxin:NAD(+) oxidoreductase complex subunit B (284 aa).

Residues 1 to 26 are hydrophobic; sequence MNTVIMILVVMTIIGLIFGLVLAYVN. The region spanning 32–92 is the 4Fe-4S domain; it reads EVNPLVDLVE…AEQVAKLTGK (61 aa). [4Fe-4S] cluster is bound by residues Cys49, Cys52, Cys57, Cys75, Cys138, Cys142, Cys148, Cys152, Cys172, Cys175, Cys178, Cys182, Cys217, Cys220, Cys223, Cys227, Cys246, Cys249, Cys254, and Cys258. 4Fe-4S ferredoxin-type domains are found at residues 133–162, 163–192, 206–237, and 239–269; these read GGPK…MGSN, GLPI…FRPV, GGAV…VENN, and AVVD…IVSG.

Belongs to the 4Fe4S bacterial-type ferredoxin family. RnfB subfamily. As to quaternary structure, the complex is composed of six subunits: RnfA, RnfB, RnfC, RnfD, RnfE and RnfG. [4Fe-4S] cluster is required as a cofactor.

Its subcellular location is the cell membrane. Its function is as follows. Part of a membrane-bound complex that couples electron transfer with translocation of ions across the membrane. Couples electron transfer from reduced ferredoxin to NAD(+) with translocation of H(+) out of the cell. Essential for energy conservation during autotrophic growth. Contributes to ATP synthesis during heterotrophic growth. The polypeptide is Proton-translocating ferredoxin:NAD(+) oxidoreductase complex subunit B (Clostridium ljungdahlii (strain ATCC 55383 / DSM 13528 / PETC)).